A 537-amino-acid polypeptide reads, in one-letter code: MALTQRLEFRQSQSLVMTPQLMQAIKLLQLSNLDLTTFVEEELERNPLLERANDEASGGEAPAEAGQFSDSDGGHNDEPGGGPGEAFEPGQEEWMSKDLGTRAEIEQTLDTGLDNVFSEEPAEAAARNAQDAAPTTYTEWGGGASGDEDYNLEAFVAAEVTLGDHLAEQLSVAFTAPAQRMIGQYLIDLVDEAGYLPPDLGQAAERLGASQQEVEDVLAVLQKFDPPGVCARNLSECLAIQLRELDRYDPAMQALVEHLDLLAKRDIAGLRKVCGVDDEDIADMIGEIRRLNPKPGMKFGAARLQTMVPDVYVRPGPDGGWHVELNSDTLPRVLVNQTYYSELSKKIGKDGDKSYFTDALQNATWLVRALDQRARTILKVATEIVRQQDGFFTHGVAHLRPLNLKAVADAIQMHESTVSRVTANKYMATNRGTFELKYFFTASIASADGGEAHSAEAVRHHIKQLIDSEAPAAILSDDTIVERLRASGIDIARRTVAKYREAMRIPSSVQRRRDKQSALGNVLSTAMSDRSRNPEPA.

Residues 52-90 (ANDEASGGEAPAEAGQFSDSDGGHNDEPGGGPGEAFEPG) are disordered. Over residues 55-66 (EASGGEAPAEAG) the composition is skewed to low complexity. Positions 403–422 (NLKAVADAIQMHESTVSRVT) form a DNA-binding region, H-T-H motif. Residues 492-500 (ARRTVAKYR) carry the RPON box motif. Positions 507–537 (SSVQRRRDKQSALGNVLSTAMSDRSRNPEPA) are disordered. A compositionally biased stretch (polar residues) spans 518–528 (ALGNVLSTAMS).

The protein belongs to the sigma-54 factor family.

Its function is as follows. Sigma factors are initiation factors that promote the attachment of RNA polymerase to specific initiation sites and are then released. This sigma factor is responsible for the expression of the nitrogen fixation genes. The chain is RNA polymerase sigma-54 factor 2 (rpoN2) from Bradyrhizobium diazoefficiens (strain JCM 10833 / BCRC 13528 / IAM 13628 / NBRC 14792 / USDA 110).